A 216-amino-acid polypeptide reads, in one-letter code: Peptide methionine sulfoxide reductase MsrA (216 aa).

Residue Cys54 is part of the active site.

Belongs to the MsrA Met sulfoxide reductase family.

The enzyme catalyses L-methionyl-[protein] + [thioredoxin]-disulfide + H2O = L-methionyl-(S)-S-oxide-[protein] + [thioredoxin]-dithiol. It carries out the reaction [thioredoxin]-disulfide + L-methionine + H2O = L-methionine (S)-S-oxide + [thioredoxin]-dithiol. Its function is as follows. Has an important function as a repair enzyme for proteins that have been inactivated by oxidation. Catalyzes the reversible oxidation-reduction of methionine sulfoxide in proteins to methionine. This is Peptide methionine sulfoxide reductase MsrA from Xanthomonas oryzae pv. oryzae (strain PXO99A).